We begin with the raw amino-acid sequence, 306 residues long: ClpXP adapter protein SpxH (306 aa).

The protein belongs to the SpxH family. Interacts with Spx.

The protein resides in the cytoplasm. In terms of biological role, adapter protein required for efficient degradation of Spx by ClpXP under non-stress conditions. Interaction with Spx stabilizes Spx and exposes the C-terminus of Spx for recognition and proteolysis by ClpXP. The polypeptide is ClpXP adapter protein SpxH (Halalkalibacterium halodurans (strain ATCC BAA-125 / DSM 18197 / FERM 7344 / JCM 9153 / C-125) (Bacillus halodurans)).